A 1162-amino-acid polypeptide reads, in one-letter code: Leptin receptor (1162 aa).

The first 21 residues, 1–21 (MTCQKFYVVLLHWEFLYVITA), serve as a signal peptide directing secretion. Residues 22–839 (LNLAYPTSPW…DIAKQQNDAG (818 aa)) lie on the Extracellular side of the membrane. 5 cysteine pairs are disulfide-bonded: C37–C90, C89–C99, C131–C142, C186–C195, and C188–C193. N-linked (GlcNAc...) asparagine glycosylation is found at N55, N56, N73, and N98. Residue N187 is glycosylated (N-linked (GlcNAc...) asparagine). Residues 238–331 (PPLGLRMEVT…LPQLFTTQDV (94 aa)) enclose the Fibronectin type-III 1 domain. Residues N275, N345, and N356 are each glycosylated (N-linked (GlcNAc...) asparagine). Cystine bridges form between C350–C410 and C411–C416. A glycan (N-linked (GlcNAc...) asparagine) is linked at N431. 3 cysteine pairs are disulfide-bonded: C434–C445, C471–C526, and C486–C496. The interval 465–482 (HRRSLYCPDNPSIRPTSE) is leptin-binding. N514, N622, N657, N668, N686, N695, N698, and N726 each carry an N-linked (GlcNAc...) asparagine glycan. 3 Fibronectin type-III domains span residues 537 to 632 (PPSN…TLVM), 637 to 729 (PMRG…NLTF), and 738 to 831 (AVQS…KDDI). The short motif at 620–624 (WSNWS) is the WSXWS motif element. A helical membrane pass occupies residues 840–860 (LYVIVPIIISSCVLLLGTLLI). Over 861-1162 (SHQRMKKLFW…IENKMCDLTV (302 aa)) the chain is Cytoplasmic. The short motif at 869–877 (FWDDVPNPK) is the Box 1 motif element. S880 is subject to Phosphoserine. The tract at residues 891 to 896 (ETFEHL) is required for JAK2 activation. The interval 896–904 (LFTKHAESV) is required for STAT3 phosphorylation. Y985 is modified (phosphotyrosine; by JAK2). At Y1077 the chain carries Phosphotyrosine. Phosphotyrosine; by JAK2 is present on Y1138.

This sequence belongs to the type I cytokine receptor family. Type 2 subfamily. In terms of assembly, present as a mixture of monomers and dimers. The phosphorylated receptor binds a number of SH2 domain-containing proteins such as JAK2, STAT3, PTPN11, and SOCS3. Interaction with SOCS3 inhibits JAK/STAT signaling and MAPK cascade. In terms of processing, on ligand binding, phosphorylated on two conserved C-terminal tyrosine residues (isoform B only) by JAK2. Tyr-985 is required for complete binding and activation of PTPN11, ERK/FOS activation,for interaction with SOCS3 and SOCS3 mediated inhibition of leptin signaling. Phosphorylation on Tyr-1138 is required for STAT3 binding/activation. Phosphorylation of Tyr-1077 has a more accessory role. In terms of tissue distribution, isoform B is expressed in kidney, liver, lung, ovary, spleen and uterus. Increased level in uterus during gestation. Isoform A and isoform C are predominantly expressed in cerebral microvessels and choroid plexus, with lower levels in cortex, cerebellum and hypothalamus but also liver and lung. Isoform F is expressed at high levels in brain, liver and spleen and less in stomach, kidney, thymus, heart, lung and hypothalamus.

It localises to the cell membrane. The protein localises to the basolateral cell membrane. Its subcellular location is the secreted. Its function is as follows. Receptor for hormone LEP/leptin. On ligand binding, mediates LEP central and peripheral effects through the activation of different signaling pathways such as JAK2/STAT3 and MAPK cascade/FOS. In the hypothalamus, LEP acts as an appetite-regulating factor that induces a decrease in food intake and an increase in energy consumption by inducing anorexinogenic factors and suppressing orexigenic neuropeptides, also regulates bone mass and secretion of hypothalamo-pituitary-adrenal hormones. In the periphery, increases basal metabolism, influences reproductive function, regulates pancreatic beta-cell function and insulin secretion, is pro-angiogenic and affects innate and adaptive immunity. Control of energy homeostasis and melanocortin production (stimulation of POMC and full repression of AgRP transcription) is mediated by STAT3 signaling, whereas distinct signals regulate NPY and the control of fertility, growth and glucose homeostasis. Involved in the regulation of counter-regulatory response to hypoglycemia by inhibiting neurons of the parabrachial nucleus. Has a specific effect on T lymphocyte responses, differentially regulating the proliferation of naive and memory T-cells. Leptin increases Th1 and suppresses Th2 cytokine production. In terms of biological role, may transport LEP across the blood-brain barrier. Binds LEP and mediates LEP endocytosis. Does not induce phosphorylation of and activate STAT3. Antagonizes Isoform A and isoform B-mediated LEP binding and endocytosis. In Rattus norvegicus (Rat), this protein is Leptin receptor (Lepr).